The sequence spans 444 residues: Tubulin beta chain (444 aa).

Residues Gln-11, Glu-69, Ser-138, Gly-142, Thr-143, Gly-144, Asn-204, and Asn-226 each contribute to the GTP site. Glu-69 lines the Mg(2+) pocket.

The protein belongs to the tubulin family. Dimer of alpha and beta chains. A typical microtubule is a hollow water-filled tube with an outer diameter of 25 nm and an inner diameter of 15 nM. Alpha-beta heterodimers associate head-to-tail to form protofilaments running lengthwise along the microtubule wall with the beta-tubulin subunit facing the microtubule plus end conferring a structural polarity. Microtubules usually have 13 protofilaments but different protofilament numbers can be found in some organisms and specialized cells. Mg(2+) is required as a cofactor.

It localises to the cytoplasm. The protein localises to the cytoskeleton. Functionally, tubulin is the major constituent of microtubules, a cylinder consisting of laterally associated linear protofilaments composed of alpha- and beta-tubulin heterodimers. Microtubules grow by the addition of GTP-tubulin dimers to the microtubule end, where a stabilizing cap forms. Below the cap, tubulin dimers are in GDP-bound state, owing to GTPase activity of alpha-tubulin. The protein is Tubulin beta chain of Trichuris trichiura (Whipworm).